We begin with the raw amino-acid sequence, 1342 residues long: DNA-directed RNA polymerase subunit beta (1342 aa).

This sequence belongs to the RNA polymerase beta chain family. In terms of assembly, the RNAP catalytic core consists of 2 alpha, 1 beta, 1 beta' and 1 omega subunit. When a sigma factor is associated with the core the holoenzyme is formed, which can initiate transcription.

The catalysed reaction is RNA(n) + a ribonucleoside 5'-triphosphate = RNA(n+1) + diphosphate. DNA-dependent RNA polymerase catalyzes the transcription of DNA into RNA using the four ribonucleoside triphosphates as substrates. In Buchnera aphidicola subsp. Acyrthosiphon pisum (strain 5A), this protein is DNA-directed RNA polymerase subunit beta.